Reading from the N-terminus, the 210-residue chain is Cilia- and flagella-associated protein 418 (210 aa).

The required for interaction with FAM161A stretch occupies residues 1-77; sequence MAKDLDELLD…LINEIFEEPN (77 aa). The disordered stretch occupies residues 24–59; sequence LDLGERPKGGSGGGGTHSGDRNGAQEKDTLRSTETF. The segment covering 41 to 59 has biased composition (basic and acidic residues); sequence SGDRNGAQEKDTLRSTETF.

Interacts (via N-terminus) with FAM161A (via central region); the interaction is direct.

The protein localises to the cytoplasm. It is found in the photoreceptor inner segment. May be involved in photoreceptor outer segment disk morphogenesis. The polypeptide is Cilia- and flagella-associated protein 418 (Rattus norvegicus (Rat)).